Consider the following 311-residue polypeptide: Small ribosomal subunit protein uS3 (311 aa).

In terms of domain architecture, KH type-2 spans 17 to 86; the sequence is MDEYFAEQLN…NPQIDAQEVK (70 aa). The disordered stretch occupies residues 190–267; it reads PDSYTTTEPS…EPQAEVAEDL (78 aa). Over residues 194–204 the composition is skewed to low complexity; sequence TTTEPSEPVTE. Residues 205 to 231 are compositionally biased toward basic and acidic residues; it reads PVEKPAEKPAAKPAEKPVEAPKKESAA. Over residues 232 to 247 the composition is skewed to low complexity; that stretch reads KPKTPAVAPEKPVETA. Positions 248-267 are enriched in acidic residues; the sequence is EVAEPEEAEEEPQAEVAEDL.

This sequence belongs to the universal ribosomal protein uS3 family. In terms of assembly, part of the 30S ribosomal subunit.

Functionally, binds the lower part of the 30S subunit head. This Methanosarcina barkeri (strain Fusaro / DSM 804) protein is Small ribosomal subunit protein uS3.